A 466-amino-acid chain; its full sequence is Uronate isomerase (466 aa).

This sequence belongs to the metallo-dependent hydrolases superfamily. Uronate isomerase family.

The enzyme catalyses D-glucuronate = D-fructuronate. It carries out the reaction aldehydo-D-galacturonate = keto-D-tagaturonate. Its pathway is carbohydrate metabolism; pentose and glucuronate interconversion. The polypeptide is Uronate isomerase (Clostridium perfringens (strain 13 / Type A)).